We begin with the raw amino-acid sequence, 556 residues long: Oxygen-dependent choline dehydrogenase (556 aa).

Residue 4–33 participates in FAD binding; that stretch reads DYIIIGAGSAGNVLATRLTEDPNTTVLLLE. His-473 (proton acceptor) is an active-site residue.

Belongs to the GMC oxidoreductase family. It depends on FAD as a cofactor.

The catalysed reaction is choline + A = betaine aldehyde + AH2. The enzyme catalyses betaine aldehyde + NAD(+) + H2O = glycine betaine + NADH + 2 H(+). Its pathway is amine and polyamine biosynthesis; betaine biosynthesis via choline pathway; betaine aldehyde from choline (cytochrome c reductase route): step 1/1. In terms of biological role, involved in the biosynthesis of the osmoprotectant glycine betaine. Catalyzes the oxidation of choline to betaine aldehyde and betaine aldehyde to glycine betaine at the same rate. The protein is Oxygen-dependent choline dehydrogenase of Escherichia coli O6:K15:H31 (strain 536 / UPEC).